Consider the following 877-residue polypeptide: Leucine--tRNA ligase (877 aa).

Positions Pro43 to His53 match the 'HIGH' region motif. The 'KMSKS' region signature appears at Lys628–Ser632. Lys631 provides a ligand contact to ATP.

The protein belongs to the class-I aminoacyl-tRNA synthetase family.

It is found in the cytoplasm. The enzyme catalyses tRNA(Leu) + L-leucine + ATP = L-leucyl-tRNA(Leu) + AMP + diphosphate. This is Leucine--tRNA ligase from Brucella melitensis biotype 2 (strain ATCC 23457).